A 249-amino-acid chain; its full sequence is Gamma-glutamyl peptidase 3 (249 aa).

A Glutamine amidotransferase type-1 domain is found at Ser-19–Met-217. Catalysis depends on Cys-103, which acts as the Nucleophile. Residues His-196 and Glu-198 contribute to the active site.

Belongs to the peptidase C26 family.

It localises to the cytoplasm. Its subcellular location is the cytosol. The catalysed reaction is an S-[(1E)-1-(hydroxyimino)-omega-(methylsulfanyl)alkyl]-L-glutathione + H2O = an S-[(1E)-1-(hydroxyimino)-omega-(methylsulfanyl)alkyl]-L-cysteinylglycine + L-glutamate. The enzyme catalyses (E)-1-(glutathione-S-yl)-2-(1H-indol-3-yl)acetohydroximate + H2O = (E)-1-(glycyl-L-cystein-S-yl)-2-(1H-indol-3-yl)acetohydroximate + L-glutamate. It catalyses the reaction 2-(glutathion-S-yl)-2-(1H-indol-3-yl)acetonitrile + H2O = 2-(glycyl-L-cystein-S-yl)-2-(1H-indol-3-yl)acetonitrile + L-glutamate. It carries out the reaction (Z)-1-(glutathione-S-yl)-2-phenylacetohydroximate + H2O = (Z)-1-(glycyl-L-cystein-S-yl)-2-phenylacetohydroximate + L-glutamate. It participates in secondary metabolite biosynthesis. Involved in glucosinolate biosynthesis. Hydrolyzes the gamma-glutamyl peptide bond of several glutathione (GSH) conjugates to produce Cys-Gly conjugates related to glucosinolates. The gamma-Glu-Cys-Gly-GSH conjugates are the sulfur-donating molecule in glucosinolate biosynthesis. Can use the GSH conjugate of the camalexin intermediate IAN (GS-IAN) as substrate. Required for the biosynthesis of camalexin, a pathogen-inducible phytoalexin with antibacterial and antifungal properties. The chain is Gamma-glutamyl peptidase 3 from Arabidopsis thaliana (Mouse-ear cress).